We begin with the raw amino-acid sequence, 125 residues long: Large ribosomal subunit protein bL12 (125 aa).

This sequence belongs to the bacterial ribosomal protein bL12 family. Homodimer. Part of the ribosomal stalk of the 50S ribosomal subunit. Forms a multimeric L10(L12)X complex, where L10 forms an elongated spine to which 2 to 4 L12 dimers bind in a sequential fashion. Binds GTP-bound translation factors.

In terms of biological role, forms part of the ribosomal stalk which helps the ribosome interact with GTP-bound translation factors. Is thus essential for accurate translation. The protein is Large ribosomal subunit protein bL12 of Helicobacter pylori (strain P12).